The chain runs to 631 residues: Probable methyltransferase PMT16 (631 aa).

Residues 1 to 14 (MNLFTRISSRTKKA) are Cytoplasmic-facing. A helical; Signal-anchor for type II membrane protein membrane pass occupies residues 15 to 35 (NLYYVTLVALLCIASYLLGIW). At 36-631 (QNTAVNPRAA…EDKNNTSALS (596 aa)) the chain is on the lumenal side. N-linked (GlcNAc...) asparagine glycans are attached at residues N61, N230, and N626.

Belongs to the methyltransferase superfamily.

It is found in the endoplasmic reticulum membrane. The protein is Probable methyltransferase PMT16 of Arabidopsis thaliana (Mouse-ear cress).